We begin with the raw amino-acid sequence, 473 residues long: Dynein axonemal assembly factor 11 (473 aa).

4 LRR repeats span residues 22–43 (SLEELSLHQQEIERLEHIDKWC), 45–66 (DLKILYLQNNLIGKIENVSKLK), 67–88 (KLEYLNLALNNIERIENLEGCE), and 89–110 (WLTKLDLTVNFIGELSSVKTLT). One can recognise an LRRCT domain in the interval 123-161 (NPCADFDGYRQFVVVTLQQLKWLDGKEIERSERIQALQN). A coiled-coil region spans residues 153 to 205 (SERIQALQNYTSVEQQIREQEKAYCLRRAKEKEEAQRKLEEENESEDKKKSST). Basic and acidic residues-rich tracts occupy residues 188–202 (QRKLEEENESEDKKK) and 273–283 (EKQRKAQDKLS). 3 disordered regions span residues 188–244 (QRKL…TKES), 273–292 (EKQRKAQDKLSEKKKKAKPP), and 387–473 (VGEM…PPLI). Residues 305 to 402 (VNEAKLDFSL…GGQRTPTSVK (98 aa)) enclose the CS domain. Positions 397-408 (TPTSVKTTSTSS) are enriched in low complexity. Basic and acidic residues predominate over residues 417–431 (KQIERLEVDPSKHSC). The segment covering 456-467 (PSEEDPDFEDNP) has biased composition (acidic residues).

It belongs to the tilB family. In terms of assembly, interacts (via CS domain) with ZMYND10 (via C-terminus). In terms of tissue distribution, mainly expressed in cells with motile cilia. Expressed in epithelial cells of the trachea, testis and ependymal cells of the cerebral ventricles. In testis, abundant expression in late prophase of meiosis I with a dramatic decrease after the first meiotic division (at protein level).

Its subcellular location is the cytoplasm. The protein localises to the cell projection. It localises to the cilium. It is found in the dynein axonemal particle. The protein resides in the flagellum. Functionally, involved in dynein arm assembly, is important for expression and transporting outer dynein arm (ODA) proteins from the cytoplasm to the cilia. Acts as a crucial component in the formation and motility of spermatozoal flagella. The sequence is that of Dynein axonemal assembly factor 11 (Dnaaf11) from Mus musculus (Mouse).